The chain runs to 333 residues: Transcription factor HHO6 (333 aa).

The 61-residue stretch at 189–249 (ALRKQRRCWN…HLQKYRLHIR (61 aa)) folds into the HTH myb-type domain. A DNA-binding region (H-T-H motif) is located at residues 220–245 (PKQIREHMQEEGLTNDEVKSHLQKYR). The segment at 274 to 333 (DEEETCEGGESLKRSNAQSDSPQGPLQLPSTTTTTGGDSSMEDVEDAKSESFQLERLRSP) is disordered. Over residues 287 to 303 (RSNAQSDSPQGPLQLPS) the composition is skewed to polar residues. A compositionally biased stretch (basic and acidic residues) spans 319 to 333 (DAKSESFQLERLRSP).

It localises to the nucleus. Functionally, probable transcription factor involved in phosphate signaling in roots. The sequence is that of Transcription factor HHO6 from Arabidopsis thaliana (Mouse-ear cress).